We begin with the raw amino-acid sequence, 265 residues long: Small ribosomal subunit protein uS2 (265 aa).

The segment at 231-265 is disordered; sequence VEEEYEDYEGAEDDYEYDETEYTDSVIPDDEEEAE.

It belongs to the universal ribosomal protein uS2 family.

The polypeptide is Small ribosomal subunit protein uS2 (Trichormus variabilis (strain ATCC 29413 / PCC 7937) (Anabaena variabilis)).